The primary structure comprises 227 residues: Pyridoxine-5'-phosphate oxidase (227 aa).

20–23 (RKDY) contributes to the pyridoxal 5'-phosphate binding site. Residue 75–78 (RVVL) participates in FMN binding. Residue lysine 80 coordinates pyridoxal 5'-phosphate. FMN is bound by residues 90–91 (YT), 96–97 (RK), and glutamine 117. Pyridoxal 5'-phosphate contacts are provided by tyrosine 135, arginine 139, and serine 143. Residues 152–153 (FQ) and tryptophan 197 each bind FMN. 203–205 (RIH) provides a ligand contact to pyridoxal 5'-phosphate. Position 207 (arginine 207) interacts with FMN.

This sequence belongs to the pyridoxamine 5'-phosphate oxidase family. As to quaternary structure, homodimer. The cofactor is FMN.

It carries out the reaction pyridoxamine 5'-phosphate + O2 + H2O = pyridoxal 5'-phosphate + H2O2 + NH4(+). The enzyme catalyses pyridoxine 5'-phosphate + O2 = pyridoxal 5'-phosphate + H2O2. The protein operates within cofactor metabolism; pyridoxal 5'-phosphate salvage; pyridoxal 5'-phosphate from pyridoxamine 5'-phosphate: step 1/1. It functions in the pathway cofactor metabolism; pyridoxal 5'-phosphate salvage; pyridoxal 5'-phosphate from pyridoxine 5'-phosphate: step 1/1. Functionally, catalyzes the oxidation of either pyridoxine 5'-phosphate (PNP) or pyridoxamine 5'-phosphate (PMP) into pyridoxal 5'-phosphate (PLP). This Dictyostelium discoideum (Social amoeba) protein is Pyridoxine-5'-phosphate oxidase (pnpo).